A 343-amino-acid polypeptide reads, in one-letter code: E3 ubiquitin-protein ligase SP1 (343 aa).

A helical membrane pass occupies residues 1-21; that stretch reads MIPWGGVTCCLSAAALYLLGR. The Chloroplast intermembrane segment spans residues 22 to 222; it reads SSGRDAEVLE…LISNLGKWSR (201 aa). Residues 223-244 traverse the membrane as a helical segment; it reads LYKYASMGFTVLGVFLITKHVI. Over 245-343 the chain is Cytoplasmic; the sequence is DSVLERRRRR…IDLAVKTYRH (99 aa). Residues 296–331 form an RING-type zinc finger; sequence CVICLEQEYNAVFVPCGHMCCCTACSSHLTSCPLCR.

In terms of assembly, interacts with TOC33, TOC75-3 and TOC159. Post-translationally, auto-ubiquitinated.

The protein resides in the plastid. The protein localises to the chloroplast outer membrane. The catalysed reaction is S-ubiquitinyl-[E2 ubiquitin-conjugating enzyme]-L-cysteine + [acceptor protein]-L-lysine = [E2 ubiquitin-conjugating enzyme]-L-cysteine + N(6)-ubiquitinyl-[acceptor protein]-L-lysine.. The protein operates within protein modification; protein ubiquitination. Its function is as follows. E3 ubiquitin-protein ligase involved in the regulation of protein import in the chloroplast. Associates with TOC complexes and mediates ubiquitination of TOC components, promoting their degradation via the ubiquitin-proteasome system (UPS). Plays a role in the reorganization of the TOC machinery. Involved in a mechanism that regulates plastid biogenesis via UPS. Promotes stress tolerance by depleting the chloroplast protein import apparatus, which limits photosystem assembly and the potential for reactive oxygen species (ROS) formation. May act as negative regulator of programmed cell death (PCD) during biotic stress. The polypeptide is E3 ubiquitin-protein ligase SP1 (Arabidopsis thaliana (Mouse-ear cress)).